We begin with the raw amino-acid sequence, 212 residues long: Glycerol-3-phosphate acyltransferase (212 aa).

A run of 5 helical transmembrane segments spans residues 10–30 (FAALLIVLAYLIGCVPFAVVV), 90–110 (GYGLVLIAVFLGHLYPVSLGF), 124–144 (FAVSPWLALATVATWLLVAVV), 150–170 (LAALVAAFLAPVYYFFGGGTI), and 171–191 (WPLNAPTAAALVGVSALLFYR).

The protein belongs to the PlsY family. Probably interacts with PlsX.

The protein resides in the cell inner membrane. It catalyses the reaction an acyl phosphate + sn-glycerol 3-phosphate = a 1-acyl-sn-glycero-3-phosphate + phosphate. It participates in lipid metabolism; phospholipid metabolism. In terms of biological role, catalyzes the transfer of an acyl group from acyl-phosphate (acyl-PO(4)) to glycerol-3-phosphate (G3P) to form lysophosphatidic acid (LPA). This enzyme utilizes acyl-phosphate as fatty acyl donor, but not acyl-CoA or acyl-ACP. The chain is Glycerol-3-phosphate acyltransferase from Bordetella avium (strain 197N).